Reading from the N-terminus, the 329-residue chain is Cytosolic arginine sensor for mTORC1 subunit 2 (329 aa).

ACT domains are found at residues 72–139 (ADAT…MHTL) and 262–322 (ELWK…NALQ).

It belongs to the GATS family. May form homodimers and heterodimers.

The protein resides in the cytoplasm. The protein localises to the cytosol. Functions as a negative regulator of the TORC1 signaling pathway. In Xenopus laevis (African clawed frog), this protein is Cytosolic arginine sensor for mTORC1 subunit 2.